Here is a 546-residue protein sequence, read N- to C-terminus: MAAKDVKFGDSARKKMLVGVNVLADAVKATLGPKGRNVVLAKSFGAPTITKDGVSVAKEIELKDAFENMGAQLVKEVASKANDAAGDGTTTATVLAQAIVNEGLKAVAAGMNPMDLKRGIDKATAAIVAELKNLSKPCADSKAIAQVGTISANSDNSIGEIIAEAMEKVGKEGVITVEEGSGLENELSVVEGMQFDRGYLSPYFVNKPDTMVAELEGPLLLLVDKKISNIRELLPVLEAVAKAGRPLLIVAEDVEGEALATLVVNNMRGIVKVAAVKAPGFGDRRKAMLQDIATLTGGQVISEEIGLSLETATLEHLGNAKRVILSKENTTIIDGAGADGDIEARVKQIRAQIEETSSDYDREKLQERLAKLAGGVAVIKVGAGTEVEMKEKKARVEDALHATRAAVEEGVVPGGGVALVRALAAIADLKGDNEEQNVGIALLRRAVEAPLRQITANAGDEPSVVADKVKQGSGNFGYNAATGEYGDMIEMGILDPAKVTRSALQAAASIGGLMITTEAMVADLPEDKPAAGMPDMGGMGGMGGMM.

ATP-binding positions include 30-33 (TLGP), Lys51, 87-91 (DGTTT), Gly415, 479-481 (NAA), and Asp495.

It belongs to the chaperonin (HSP60) family. Forms a cylinder of 14 subunits composed of two heptameric rings stacked back-to-back. Interacts with the co-chaperonin GroES.

The protein resides in the cytoplasm. It catalyses the reaction ATP + H2O + a folded polypeptide = ADP + phosphate + an unfolded polypeptide.. In terms of biological role, together with its co-chaperonin GroES, plays an essential role in assisting protein folding. The GroEL-GroES system forms a nano-cage that allows encapsulation of the non-native substrate proteins and provides a physical environment optimized to promote and accelerate protein folding. The polypeptide is Chaperonin GroEL (Pseudomonas entomophila (strain L48)).